A 137-amino-acid polypeptide reads, in one-letter code: Putative pumilio homolog 25 (137 aa).

Pumilio repeat units lie at residues 70 to 105 (EFDS…LPHS) and 108 to 137 (SVLV…TRLA).

It is found in the cytoplasm. In terms of biological role, sequence-specific RNA-binding protein that regulates translation and mRNA stability by binding the 3'-UTR of target mRNAs. This chain is Putative pumilio homolog 25 (APUM25), found in Arabidopsis thaliana (Mouse-ear cress).